A 128-amino-acid chain; its full sequence is Glycine cleavage system H protein (128 aa).

The Lipoyl-binding domain maps to 24 to 106 (VYSVGITEHA…YTDGWLFSIK (83 aa)). N6-lipoyllysine is present on K65.

This sequence belongs to the GcvH family. The glycine cleavage system is composed of four proteins: P, T, L and H. (R)-lipoate is required as a cofactor.

The glycine cleavage system catalyzes the degradation of glycine. The H protein shuttles the methylamine group of glycine from the P protein to the T protein. The polypeptide is Glycine cleavage system H protein (Yersinia pseudotuberculosis serotype O:1b (strain IP 31758)).